Here is a 304-residue protein sequence, read N- to C-terminus: Polyisoprenyl-teichoic acid--peptidoglycan teichoic acid transferase TagU (304 aa).

Residues 1–3 (MKK) are Cytoplasmic-facing. Residues 4–24 (ALIAIGLILGTITVAIIGYGI) traverse the membrane as a helical; Signal-anchor for type II membrane protein segment. Over 25-304 (YLYSSIQNTA…GELKSHLELS (280 aa)) the chain is Extracellular.

It belongs to the LytR/CpsA/Psr (LCP) family.

The protein localises to the cell membrane. Its pathway is cell wall biogenesis. In terms of biological role, may catalyze the final step in cell wall teichoic acid biosynthesis, the transfer of the anionic cell wall polymers (APs) from their lipid-linked precursor to the cell wall peptidoglycan (PG). In Halalkalibacterium halodurans (strain ATCC BAA-125 / DSM 18197 / FERM 7344 / JCM 9153 / C-125) (Bacillus halodurans), this protein is Polyisoprenyl-teichoic acid--peptidoglycan teichoic acid transferase TagU.